A 693-amino-acid polypeptide reads, in one-letter code: A disintegrin and metalloproteinase with thrombospondin motifs like (693 aa).

Residues 1–24 (MESSVATHWLSAFVILCSFITTQS) form the signal peptide. Residues 67–80 (IPTSHPANSNSADS) show a composition bias toward polar residues. Residues 67–91 (IPTSHPANSNSADSGKTPHLKTEKV) form a disordered region. N-linked (GlcNAc...) asparagine glycosylation is found at Asn-124 and Asn-194. The 233-residue stretch at 353–585 (IYPEILVIVD…DTATCLYNSP (233 aa)) folds into the Peptidase M12B domain. Intrachain disulfides connect Cys-485/Cys-580 and Cys-541/Cys-564. His-514 is a binding site for Zn(2+). The Metal-binding motif lies at 514–525 (HEVGHLLGAVHD). The active site involves Glu-515. Positions 518 and 524 each coordinate Zn(2+). Asn-687 carries an N-linked (GlcNAc...) asparagine glycan.

Requires Zn(2+) as cofactor.

It localises to the secreted. The protein localises to the extracellular space. It is found in the extracellular matrix. In terms of biological role, involved in larval molting and metamorphosis. May degrade extracellular matrix (ECM) and basement membrane (BM) during the development of organs to allow degeneration and remodeling of tissues. This Bombyx mori (Silk moth) protein is A disintegrin and metalloproteinase with thrombospondin motifs like.